The sequence spans 396 residues: S-adenosylmethionine synthase (396 aa).

H14 serves as a coordination point for ATP. Position 16 (D16) interacts with Mg(2+). E42 contacts K(+). L-methionine contacts are provided by E55 and Q98. Residues 98–108 (QSPDIAQGVHG) are flexible loop. ATP is bound by residues 167-169 (DAK), 234-235 (RF), D243, 249-250 (RK), S266, and K270. D243 is an L-methionine binding site. K274 is an L-methionine binding site.

This sequence belongs to the AdoMet synthase family. As to quaternary structure, homotetramer; dimer of dimers. Requires Mg(2+) as cofactor. The cofactor is K(+).

It is found in the cytoplasm. The catalysed reaction is L-methionine + ATP + H2O = S-adenosyl-L-methionine + phosphate + diphosphate. The protein operates within amino-acid biosynthesis; S-adenosyl-L-methionine biosynthesis; S-adenosyl-L-methionine from L-methionine: step 1/1. Catalyzes the formation of S-adenosylmethionine (AdoMet) from methionine and ATP. The overall synthetic reaction is composed of two sequential steps, AdoMet formation and the subsequent tripolyphosphate hydrolysis which occurs prior to release of AdoMet from the enzyme. The chain is S-adenosylmethionine synthase from Treponema pallidum (strain Nichols).